The following is a 273-amino-acid chain: Ribosomal RNA small subunit methyltransferase A (273 aa).

6 residues coordinate S-adenosyl-L-methionine: asparagine 18, leucine 20, glycine 45, glutamate 66, aspartate 91, and asparagine 113.

Belongs to the class I-like SAM-binding methyltransferase superfamily. rRNA adenine N(6)-methyltransferase family. RsmA subfamily.

The protein localises to the cytoplasm. The enzyme catalyses adenosine(1518)/adenosine(1519) in 16S rRNA + 4 S-adenosyl-L-methionine = N(6)-dimethyladenosine(1518)/N(6)-dimethyladenosine(1519) in 16S rRNA + 4 S-adenosyl-L-homocysteine + 4 H(+). Its function is as follows. Specifically dimethylates two adjacent adenosines (A1518 and A1519) in the loop of a conserved hairpin near the 3'-end of 16S rRNA in the 30S particle. May play a critical role in biogenesis of 30S subunits. This Salmonella newport (strain SL254) protein is Ribosomal RNA small subunit methyltransferase A.